A 319-amino-acid chain; its full sequence is Acetyl-coenzyme A carboxylase carboxyl transferase subunit alpha (319 aa).

A CoA carboxyltransferase C-terminal domain is found at 36–293 (EVERLKTKLE…HDAFLSELDR (258 aa)).

This sequence belongs to the AccA family. As to quaternary structure, acetyl-CoA carboxylase is a heterohexamer composed of biotin carboxyl carrier protein (AccB), biotin carboxylase (AccC) and two subunits each of ACCase subunit alpha (AccA) and ACCase subunit beta (AccD).

It localises to the cytoplasm. It catalyses the reaction N(6)-carboxybiotinyl-L-lysyl-[protein] + acetyl-CoA = N(6)-biotinyl-L-lysyl-[protein] + malonyl-CoA. The protein operates within lipid metabolism; malonyl-CoA biosynthesis; malonyl-CoA from acetyl-CoA: step 1/1. Functionally, component of the acetyl coenzyme A carboxylase (ACC) complex. First, biotin carboxylase catalyzes the carboxylation of biotin on its carrier protein (BCCP) and then the CO(2) group is transferred by the carboxyltransferase to acetyl-CoA to form malonyl-CoA. The polypeptide is Acetyl-coenzyme A carboxylase carboxyl transferase subunit alpha (Dichelobacter nodosus (strain VCS1703A)).